The chain runs to 491 residues: UDP-N-acetylmuramate--L-alanine ligase (491 aa).

126–132 is an ATP binding site; it reads GTHGKTT.

Belongs to the MurCDEF family.

The protein localises to the cytoplasm. The catalysed reaction is UDP-N-acetyl-alpha-D-muramate + L-alanine + ATP = UDP-N-acetyl-alpha-D-muramoyl-L-alanine + ADP + phosphate + H(+). The protein operates within cell wall biogenesis; peptidoglycan biosynthesis. In terms of biological role, cell wall formation. The chain is UDP-N-acetylmuramate--L-alanine ligase from Escherichia coli (strain SE11).